The chain runs to 380 residues: Cytochrome b (380 aa).

Helical transmembrane passes span 34 to 54 (FGSLLGICLITQIITGLLLAM), 78 to 99 (WLIRHLHANGASFFFICIYLHI), 114 to 134 (WNIGVILLLTLMATAFVGYVL), and 179 to 199 (LFALHFLLPFVIAGLTLVHLT). Positions 84 and 98 each coordinate heme b. Residues histidine 183 and histidine 197 each coordinate heme b. Histidine 202 contacts a ubiquinone. The next 4 membrane-spanning stretches (helical) occupy residues 227 to 247 (IKDLLGFVLMLTPLIAMALFA), 289 to 309 (LGGVLALAASVLVLFLIPLLH), 321 to 341 (LSQMLFWTLVADLLILTWVGS), and 348 to 368 (FIIIGQLASLAYFTIILVLFP).

Belongs to the cytochrome b family. In terms of assembly, the cytochrome bc1 complex contains 11 subunits: 3 respiratory subunits (MT-CYB, CYC1 and UQCRFS1), 2 core proteins (UQCRC1 and UQCRC2) and 6 low-molecular weight proteins (UQCRH/QCR6, UQCRB/QCR7, UQCRQ/QCR8, UQCR10/QCR9, UQCR11/QCR10 and a cleavage product of UQCRFS1). This cytochrome bc1 complex then forms a dimer. The cofactor is heme b.

It is found in the mitochondrion inner membrane. Functionally, component of the ubiquinol-cytochrome c reductase complex (complex III or cytochrome b-c1 complex) that is part of the mitochondrial respiratory chain. The b-c1 complex mediates electron transfer from ubiquinol to cytochrome c. Contributes to the generation of a proton gradient across the mitochondrial membrane that is then used for ATP synthesis. This is Cytochrome b (MT-CYB) from Aphelocoma coerulescens (Florida scrub-jay).